The primary structure comprises 775 residues: Metal transporter CNNM4 (775 aa).

Residues 1 to 178 (MAPVGGGGRP…LLFMVEEPGR (178 aa)) are Extracellular-facing. Residues N85 and N122 are each glycosylated (N-linked (GlcNAc...) asparagine). One can recognise a CNNM transmembrane domain in the interval 178-358 (RFLPLWLHIL…EPYNDLVKEE (181 aa)). The helical transmembrane segment at 179–199 (FLPLWLHILLITVLLVLSGIF) threads the bilayer. The Cytoplasmic segment spans residues 200 to 240 (SGLNLGLMALDPMELRIVQNCGTEKERRYARKIEPIRRKGN). An intramembrane region (helical) is located at residues 241–261 (YLLCSLLLGNVLVNTSLTILL). Residues 262–264 (DNL) are Cytoplasmic-facing. A helical transmembrane segment spans residues 265-285 (IGSGLMAVASSTIGIVIFGEI). Residues 286–293 (LPQALCSR) are Extracellular-facing. A helical membrane pass occupies residues 294–316 (HGLAVGANTILLTKFFMLLTFPL). The Cytoplasmic segment spans residues 317-775 (SFPISKLLDF…LHKASHENAI (459 aa)). CBS domains follow at residues 377–438 (MTQL…CTPL) and 445–511 (YNHP…ILDE). Phosphoserine occurs at positions 660, 664, and 770.

It belongs to the ACDP family. In terms of assembly, interacts with COX11. As to expression, widely expressed. Highly expressed in heart.

It localises to the cell membrane. In terms of biological role, probable metal transporter. The interaction with the metal ion chaperone COX11 suggests that it may play a role in sensory neuron functions. May play a role in biomineralization and retinal function. This chain is Metal transporter CNNM4 (CNNM4), found in Homo sapiens (Human).